Reading from the N-terminus, the 348-residue chain is tRNA N6-adenosine threonylcarbamoyltransferase (348 aa).

Residues histidine 111 and histidine 115 each contribute to the Fe cation site. Residues 134–138, aspartate 167, glycine 180, aspartate 184, and asparagine 279 contribute to the substrate site; that span reads LVSGG. Aspartate 307 contributes to the Fe cation binding site.

Belongs to the KAE1 / TsaD family. The cofactor is Fe(2+).

The protein resides in the cytoplasm. The catalysed reaction is L-threonylcarbamoyladenylate + adenosine(37) in tRNA = N(6)-L-threonylcarbamoyladenosine(37) in tRNA + AMP + H(+). Its function is as follows. Required for the formation of a threonylcarbamoyl group on adenosine at position 37 (t(6)A37) in tRNAs that read codons beginning with adenine. Is involved in the transfer of the threonylcarbamoyl moiety of threonylcarbamoyl-AMP (TC-AMP) to the N6 group of A37, together with TsaE and TsaB. TsaD likely plays a direct catalytic role in this reaction. The polypeptide is tRNA N6-adenosine threonylcarbamoyltransferase (Synechocystis sp. (strain ATCC 27184 / PCC 6803 / Kazusa)).